A 428-amino-acid polypeptide reads, in one-letter code: D-amino acid dehydrogenase (428 aa).

Residue 3-17 (VVILGSGVVGVASAY) participates in FAD binding.

The protein belongs to the DadA oxidoreductase family. FAD is required as a cofactor.

It carries out the reaction a D-alpha-amino acid + A + H2O = a 2-oxocarboxylate + AH2 + NH4(+). Its pathway is amino-acid degradation; D-alanine degradation; NH(3) and pyruvate from D-alanine: step 1/1. Functionally, oxidative deamination of D-amino acids. This Burkholderia cenocepacia (strain HI2424) protein is D-amino acid dehydrogenase.